A 152-amino-acid chain; its full sequence is UPF0178 protein SaurJH9_0705 (152 aa).

Belongs to the UPF0178 family.

This Staphylococcus aureus (strain JH9) protein is UPF0178 protein SaurJH9_0705.